A 417-amino-acid chain; its full sequence is Tryptophan decarboxylase (417 aa).

Position 263 is an N6-(pyridoxal phosphate)lysine (Lys-263).

This sequence belongs to the group II decarboxylase family. Requires pyridoxal 5'-phosphate as cofactor.

The protein localises to the cytoplasm. It catalyses the reaction L-tryptophan + H(+) = tryptamine + CO2. Inhibited by (S)-alpha-fluoromethyltryptophan. Functionally, catalyzes the decarboxylation of tryptophan to tryptamine. Tryptamine is a neurotransmitter that induces the release of serotonin, which is suggested to modulate gastrointestinal motility. Therefore, the tryptophan decarboxylase from the gut bacteria Clostridium sporogenes (strain ATCC 15579) may influence host brain and behavior. Has weak activity with tyrosine. Activity against phenylalanine is undetectable. The chain is Tryptophan decarboxylase from Clostridium sporogenes (strain ATCC 15579).